The following is a 2278-amino-acid chain: Protein Ycf2 (2278 aa).

Residue 1632–1639 (GSIGTGRS) participates in ATP binding.

It belongs to the Ycf2 family.

It localises to the plastid. The protein resides in the chloroplast stroma. In terms of biological role, probable ATPase of unknown function. Its presence in a non-photosynthetic plant (Epifagus virginiana) and experiments in tobacco indicate that it has an essential function which is probably not related to photosynthesis. The chain is Protein Ycf2 from Solanum tuberosum (Potato).